The primary structure comprises 856 residues: MNESKSVASNELTSGKVERTTLKLSDKLKISSNIQQGNKFSLNKSITTVEVRKSKKRKNIDEAARSSLLLQNNDIDGNSEDKNSLTIQEQISRMNALQNASNNEKREELSSDSNKHIEEEVISVKAEVEQSVDVVLPNDNLLIESDSSEKVIVDPVTDSEHGDKDFQDVVMLDEFVSSNLDDAGDQKNGDQSDDISDLLEHKGIEGKKLKKYEKEHEEKKGNPKKVMSNNTYTKHVKLVIEEELEEDNNKQVIKNYRSKKNRVTNRSVKNKITRKVLIPNKITVQELANSMSERVKDVQQVLYQMTGKHDIKLTDYLDSDQASIIVEAFNHTFKLVDNAKLENDLYSDGNNMELIPRAPVVTVMGHVDHGKTSLLDAIRESNVVDGEFKGITQHIGAYQITLNGDKKITFIDTPGHEAFAAMRAHGTNVTDIVVLVVAADDGIMPQTIESINHVKAANVAMIVAVNKIDKHDADLDRITNALLQHGVVAESLGGDVIVVPVSAKEKINLDQLKSSILLIADLLELKAVYNTRASGTVIESKVDKNCGVVATLIVQKGTLKVGDIIVAGNQAYGRVRSMFNADGGSEKVAIPSMPIKVFGLNNVPNFGTSFIVVDSEKQARELINYRQDLLNVELSKQPAVDKSNILLYDMVDELNVILKCDVMGSIEAICYSIGKITHKDIRVNILYKGVGNITKSDVLLAETSNSIILAFNVKTDTQVKELAKQKNIEIKHYFVIYDIIDDIKKILTGMLKPLKQEVQIGTLSVRKVFSVGNNGSVLGCYVTSGLVKKGALVKLVRNNNIIHEGKIKVLRRFKDDVKEVTAGFECGILLDYSKEIYPESDVMNIFEIVEEIRVIQ.

The tr-type G domain occupies 356 to 526 (PRAPVVTVMG…LLIADLLELK (171 aa)). Positions 365–372 (GHVDHGKT) are G1. Residue 365-372 (GHVDHGKT) coordinates GTP. The segment at 390–394 (GITQH) is G2. Positions 412 to 415 (DTPG) are G3. GTP contacts are provided by residues 412 to 416 (DTPGH) and 466 to 469 (NKID). The segment at 466-469 (NKID) is G4. A G5 region spans residues 502–504 (SAK).

Belongs to the TRAFAC class translation factor GTPase superfamily. Classic translation factor GTPase family. IF-2 subfamily.

The protein localises to the cytoplasm. Functionally, one of the essential components for the initiation of protein synthesis. Protects formylmethionyl-tRNA from spontaneous hydrolysis and promotes its binding to the 30S ribosomal subunits. Also involved in the hydrolysis of GTP during the formation of the 70S ribosomal complex. This Ehrlichia ruminantium (strain Welgevonden) protein is Translation initiation factor IF-2.